Here is a 965-residue protein sequence, read N- to C-terminus: Vacuolar membrane protease (965 aa).

Topologically, residues 1–16 are cytoplasmic; the sequence is MARPSLSPSNPLGFTP. Residues 17 to 37 traverse the membrane as a helical segment; sequence WPVTVITAVVYLALVVPLLVV. Residues 38-387 lie on the Vacuolar side of the membrane; it reads HHVVPSAPSS…SAFVVFELHT (350 aa). N-linked (GlcNAc...) asparagine glycosylation is found at asparagine 53 and asparagine 119. Positions 171 and 183 each coordinate Zn(2+). Residue glutamate 217 is the Proton acceptor of the active site. Zn(2+) is bound by residues glutamate 218, glutamate 243, and histidine 316. The chain crosses the membrane as a helical span at residues 388-408; sequence LFALSVTLLVVAPLVLLVTSI. Residues 409–441 lie on the Cytoplasmic side of the membrane; sequence ALARADKMYLFRSSASPEDSDGSEVVPLHGVRG. The chain crosses the membrane as a helical span at residues 442 to 462; that stretch reads FFRFPFLLVIPTAVTVGLAYL. Residues 463-472 lie on the Vacuolar side of the membrane; that stretch reads VTKFNPYIIH. The chain crosses the membrane as a helical span at residues 473 to 493; it reads SSEYAVWSMMISAWVFLAWFV. The Cytoplasmic portion of the chain corresponds to 494–507; sequence SRVADFARPSAFHR. The helical transmembrane segment at 508 to 528 threads the bilayer; the sequence is VYTLTWLFLVEWVFLVISTVY. The Vacuolar portion of the chain corresponds to 529-532; the sequence is ENQY. A helical transmembrane segment spans residues 533 to 553; sequence GLAGGYFVLFVFAGTFLATWI. At 554 to 661 the chain is on the cytoplasmic side; the sequence is SYLELFALPR…WSIHLPKWVW (108 aa). The tract at residues 577-610 is disordered; it reads RTSSHGSRLGTASGEDVEDGEDEDDDGTTAEATE. Acidic residues predominate over residues 591 to 604; sequence EDVEDGEDEDDDGT. The helical transmembrane segment at 662–682 threads the bilayer; that stretch reads VLQFLLTAPLVLIFVGPLALL. The Vacuolar segment spans residues 683 to 698; sequence LTSALRQTGQDGSPSL. The chain crosses the membrane as a helical span at residues 699–719; that stretch reads FIYIAVAALTTLLFIPLLPFI. Topologically, residues 720-725 are cytoplasmic; that stretch reads HRYTHH. The helical transmembrane segment at 726-746 threads the bilayer; the sequence is IPLFLLCVFAGTLIYNLVAFP. Over 747–965 the chain is Vacuolar; it reads FSPANRLKLF…LVEGSRRFEV (219 aa). N-linked (GlcNAc...) asparagine glycosylation is found at asparagine 793 and asparagine 830.

Belongs to the peptidase M28 family. It depends on Zn(2+) as a cofactor.

It localises to the vacuole membrane. Its function is as follows. May be involved in vacuolar sorting and osmoregulation. This chain is Vacuolar membrane protease, found in Aspergillus fumigatus (strain CBS 144.89 / FGSC A1163 / CEA10) (Neosartorya fumigata).